Reading from the N-terminus, the 141-residue chain is Large ribosomal subunit protein uL14 (141 aa).

The protein belongs to the universal ribosomal protein uL14 family.

In Tetrahymena thermophila (strain SB210), this protein is Large ribosomal subunit protein uL14 (RPL23).